Consider the following 394-residue polypeptide: Protein TsgA homolog (394 aa).

12 consecutive transmembrane segments (helical) span residues 11 to 31 (WISY…GMVM), 51 to 71 (FLNA…EIIP), 76 to 96 (LVFG…GHNL), 101 to 121 (ISMF…TFLI), 134 to 154 (LLFT…AAAI), 162 to 182 (WYWV…LTLC), 206 to 226 (MGVL…LGFI), 246 to 266 (QLVS…SFIL), 274 to 294 (IVTV…STNN), 302 to 322 (ILAL…LGSL), 334 to 354 (FILT…GPIV), and 363 to 383 (LATA…LGFF).

Belongs to the major facilitator superfamily. TsgA family.

The protein resides in the cell inner membrane. The chain is Protein TsgA homolog from Yersinia enterocolitica serotype O:8 / biotype 1B (strain NCTC 13174 / 8081).